The primary structure comprises 461 residues: L-seryl-tRNA(Sec) selenium transferase (461 aa).

Residue K294 is modified to N6-(pyridoxal phosphate)lysine.

The protein belongs to the SelA family. The cofactor is pyridoxal 5'-phosphate.

The protein localises to the cytoplasm. The enzyme catalyses L-seryl-tRNA(Sec) + selenophosphate + H(+) = L-selenocysteinyl-tRNA(Sec) + phosphate. It functions in the pathway aminoacyl-tRNA biosynthesis; selenocysteinyl-tRNA(Sec) biosynthesis; selenocysteinyl-tRNA(Sec) from L-seryl-tRNA(Sec) (bacterial route): step 1/1. In terms of biological role, converts seryl-tRNA(Sec) to selenocysteinyl-tRNA(Sec) required for selenoprotein biosynthesis. In Actinobacillus pleuropneumoniae serotype 5b (strain L20), this protein is L-seryl-tRNA(Sec) selenium transferase.